Reading from the N-terminus, the 1056-residue chain is E3 SUMO-protein ligase ZNF451 (1056 aa).

The disordered stretch occupies residues 1–39 (MGDPGPEIIESVPPAGPEASESTTDENEDDIQFVSEGPL). The segment at 1–246 (MGDPGPEIIE…AADGHSNSLL (246 aa)) is sufficient for E3 SUMO-protein ligase activity. Residues 1–344 (MGDPGPEIIE…RVRCQNAGPV (344 aa)) form an important for interaction with SUMO1 and SUMO2 region. The interaction with SUMO2 1 stretch occupies residues 30 to 37 (DIQFVSEG). Positions 38-41 (PLRP) match the PLRP motif. The interaction with SUMO2 2 stretch occupies residues 42 to 50 (VLEYIDLVS). Glycyl lysine isopeptide (Lys-Gly) (interchain with G-Cter in SUMO2) cross-links involve residues lysine 75, lysine 77, lysine 106, lysine 139, and lysine 153. Residue serine 155 is modified to Phosphoserine. An Omega-N-methylarginine modification is found at arginine 158. Residue lysine 167 forms a Glycyl lysine isopeptide (Lys-Gly) (interchain with G-Cter in SUMO2) linkage. The important for interaction with SMAD4 stretch occupies residues 168 to 521 (PILCPIMHCN…HMSRFHGGAH (354 aa)). The segment at 169–195 (ILCPIMHCNKEFDNGHLLLGHLKRFDH) adopts a C2H2-type 1 zinc-finger fold. The C2H2-type 2; degenerate zinc-finger motif lies at 212-234 (FACAVCYEHFVTQQQYKDHLLSR). The C2H2-type 3 zinc finger occupies 253–277 (YACPQCFLLFSTKDECLKHMSTKNH). Glycyl lysine isopeptide (Lys-Gly) (interchain with G-Cter in SUMO2) cross-links involve residues lysine 270, lysine 275, lysine 283, lysine 288, lysine 301, and lysine 309. The segment at 315 to 338 (VKCVACHQTLRSHMELTAHFRVRC) adopts a C2H2-type 4; atypical zinc-finger fold. Residues 362 to 385 (GYCSDCNQVFMDVASTQSHKNSGH) form a C2H2-type 5 zinc finger. Lysine 420 participates in a covalent cross-link: Glycyl lysine isopeptide (Lys-Gly) (interchain with G-Cter in SUMO2). At serine 429 the chain carries Phosphoserine. Residue lysine 431 forms a Glycyl lysine isopeptide (Lys-Gly) (interchain with G-Cter in SUMO2) linkage. 2 consecutive C2H2-type zinc fingers follow at residues 494 to 517 (YKCVVCGKVCEDSGVMRLHMSRFH) and 527 to 550 (FWCRTCKKELVKKDAIMAHITEFH). Residues lysine 539 and lysine 583 each participate in a glycyl lysine isopeptide (Lys-Gly) (interchain with G-Cter in SUMO2) cross-link. Residues 604 to 629 (WQCRICEDMFESQECVKQHCMSLTSH) form a C2H2-type 8; atypical zinc finger. 2 C2H2-type zinc fingers span residues 634–657 (YSCAHCRKTFHKVETLYRHCQDEH) and 665–688 (YFCGLCDLIFNKEEEFLSHYKEHH). Lysine 645 participates in a covalent cross-link: Glycyl lysine isopeptide (Lys-Gly) (interchain with G-Cter in SUMO2). Residue lysine 704 forms a Glycyl lysine isopeptide (Lys-Gly) (interchain with G-Cter in SUMO1); alternate linkage. A Glycyl lysine isopeptide (Lys-Gly) (interchain with G-Cter in SUMO2); alternate cross-link involves residue lysine 704. Residues lysine 729 and lysine 746 each participate in a glycyl lysine isopeptide (Lys-Gly) (interchain with G-Cter in SUMO2) cross-link. 2 C2H2-type zinc fingers span residues 751–774 (FRCSSCSATAQNVTDINTHVCQVH) and 787–810 (IKCGICTKAFQNTESAQQHFHRKH). Glycyl lysine isopeptide (Lys-Gly) (interchain with G-Cter in SUMO2) cross-links involve residues lysine 788, lysine 815, lysine 843, lysine 849, lysine 947, lysine 988, and lysine 989. 2 disordered regions span residues 806-830 (FHRKHAALQKPTATPGGANRSSTCQ) and 839-858 (EKNLKQPSSQKHSDVEKGAE). A compositionally biased stretch (basic and acidic residues) spans 849–858 (KHSDVEKGAE). A disordered region spans residues 1019-1045 (KECDSDDSSGMKGSPAEELRATEDVEL). Basic and acidic residues predominate over residues 1033–1045 (PAEELRATEDVEL). The important for ubiquitin binding stretch occupies residues 1045–1056 (LEEAIRRSLEEM).

Belongs to the krueppel C2H2-type zinc-finger protein family. As to quaternary structure, homooligomer. Interacts (via N-terminal region) with SUMO1. Interacts (via N-terminal region) with SUMO2. Interacts simultaneously with two SUMO2 chains. Identified in a complex with SUMO2 and UBE2I/UBC9, where one ZNF451 interacts with one UBE2I/UBC9 and two SUMO2 chains, one bound to the UBE2I/UBC9 active site and the other to another region of the same UBE2I/UBC9 molecule. Interacts (via C-terminus) with ubiquitin. Interacts (via N-terminal zinc-finger domains) with SMAD4 (via MH2 domain). Interacts with SMAD2 and SMAD3. Identified in a complex that contains at least ZNF451, SMAD2, SMAD3 and SMAD4. Interacts with EP300. Inhibits interaction between EP300 and the SMAD4 complex. Interacts with SIMC1. In terms of processing, sumoylated. Predominantly sumoylated on the N-terminal region that is important for interaction with SUMO1 and SUMO2. Sumoylation is important for localization in nuclear granules; desumoylation leads to diffuse nucleoplasmic location. Autosumoylated (in vitro). Sumoylation enhances E3 SUMO-protein ligase activity.

Its subcellular location is the nucleus. The protein localises to the PML body. It is found in the nucleoplasm. It functions in the pathway protein modification; protein sumoylation. In terms of biological role, E3 SUMO-protein ligase; has a preference for SUMO2 and SUMO3 and facilitates UBE2I/UBC9-mediated sumoylation of target proteins. Plays a role in protein SUMO2 modification in response to stress caused by DNA damage and by proteasome inhibitors (in vitro). Required for MCM4 sumoylation. Has no activity with SUMO1. Preferentially transfers an additional SUMO2 chain onto the SUMO2 consensus site 'Lys-11'. Negatively regulates transcriptional activation mediated by the SMAD4 complex in response to TGF-beta signaling. Inhibits EP300-mediated acetylation of histone H3 at 'Lys-9'. Plays a role in regulating the transcription of AR targets. This Mus musculus (Mouse) protein is E3 SUMO-protein ligase ZNF451 (Znf451).